The primary structure comprises 197 residues: uncharacterized protein (197 aa).

Residues 1–135 (MKTPWKFLAR…ERGKRANARV (135 aa)) are disordered. The span at 14–32 (RQPSGKTQESSAGNDTGSK) shows a compositional bias: polar residues. Basic and acidic residues predominate over residues 83–96 (IHADEAQTTARDEA). Positions 116 to 132 (SQRKPRIKRRERGKRAN) are enriched in basic residues.

The protein to Rhizobium NGR234A y4nF and y4aO.

This is an uncharacterized protein from Rhizobium meliloti (strain 1021) (Ensifer meliloti).